The primary structure comprises 289 residues: GTPase Era (289 aa).

The region spanning 2 to 167 (KSGFVSLIGR…LREIAKLLPE (166 aa)) is the Era-type G domain. Residues 10–17 (GRTNAGKS) are G1. 10 to 17 (GRTNAGKS) provides a ligand contact to GTP. Residues 36 to 40 (NATRR) form a G2 region. Residues 57–60 (DTPG) are G3. GTP-binding positions include 57–61 (DTPGL) and 116–119 (TKTD). The G4 stretch occupies residues 116-119 (TKTD). A G5 region spans residues 146–148 (VNI). The 89-residue stretch at 186–274 (YRDFILESVY…HLNLQIFVKK (89 aa)) folds into the KH type-2 domain.

This sequence belongs to the TRAFAC class TrmE-Era-EngA-EngB-Septin-like GTPase superfamily. Era GTPase family. In terms of assembly, monomer.

Its subcellular location is the cytoplasm. It is found in the cell inner membrane. An essential GTPase that binds both GDP and GTP, with rapid nucleotide exchange. Plays a role in 16S rRNA processing and 30S ribosomal subunit biogenesis and possibly also in cell cycle regulation and energy metabolism. The protein is GTPase Era of Campylobacter hominis (strain ATCC BAA-381 / DSM 21671 / CCUG 45161 / LMG 19568 / NCTC 13146 / CH001A).